Reading from the N-terminus, the 283-residue chain is Phospholipid phosphatase 1 (283 aa).

The Cytoplasmic portion of the chain corresponds to 1 to 6 (MFDKTR). The short motif at 5-7 (TRL) is the PDZ-binding; involved in localization to the apical cell membrane element. Residues 7 to 27 (LPYVALDVICVLLAGLPFAIL) form a helical membrane-spanning segment. Residues 28-53 (TSRHTPFQRGIFCNDDSIKYPYKEDT) are Extracellular-facing. The chain crosses the membrane as a helical span at residues 54–74 (IPYALLGGIVIPFCIIVMSIG). Residues 75 to 88 (ESLSVYFNVLHSNS) are Cytoplasmic-facing. The helical transmembrane segment at 89–109 (FVGNPYIATIYKAVGAFLFGV) threads the bilayer. Residues 110–164 (SASQSLTDIAKYTIGSLRPHFLAICNPDWSKINCSDGYIEDYICQGNEEKVKEGR) lie on the Extracellular side of the membrane. Positions 120–128 (KYTIGSLRP) are phosphatase sequence motif I. N-linked (GlcNAc...) asparagine glycosylation is present at Asn142. The chain crosses the membrane as a helical span at residues 165–185 (LSFYSGHSSFSMYCMLFVALY). The interval 168–171 (YSGH) is phosphatase sequence motif II. His171 functions as the Proton donors in the catalytic mechanism. Over 186–199 (LQARMKGDWARLLR) the chain is Cytoplasmic. The helical transmembrane segment at 200-220 (PMLQFGLIAFSIYVGLSRVSD) threads the bilayer. Residues 216 to 227 (SRVSDYKHHWSD) form a phosphatase sequence motif III region. The Extracellular segment spans residues 221–229 (YKHHWSDVT). His223 acts as the Nucleophile in catalysis. The helical transmembrane segment at 230 to 250 (VGLIQGAAMAILVALYVSDFF) threads the bilayer. The Cytoplasmic segment spans residues 251 to 283 (KDTHSYKERKEEDPHTTLHETASSRNYSTNHEP). Residues 260–283 (KEEDPHTTLHETASSRNYSTNHEP) form a disordered region. The span at 269-283 (HETASSRNYSTNHEP) shows a compositional bias: polar residues.

Belongs to the PA-phosphatase related phosphoesterase family. In terms of assembly, forms functional homodimers and homooligomers that are not required for substrate recognition and catalytic activity. Can also form heterooligomers with PLPP2 and PLPP3. N-glycosylated. N-linked sugars are of the complex type. N-glycosylation is not required for the phosphatase activity. In terms of tissue distribution, widely expressed. Highly expressed in kidney and lung. Almost undetectable in brain, heart, bone, muscle or spleen.

It localises to the cell membrane. It is found in the apical cell membrane. The protein resides in the membrane raft. Its subcellular location is the membrane. The protein localises to the caveola. It catalyses the reaction a 1,2-diacyl-sn-glycero-3-phosphate + H2O = a 1,2-diacyl-sn-glycerol + phosphate. The catalysed reaction is 1,2-dihexadecanoyl-sn-glycero-3-phosphate + H2O = 1,2-dihexadecanoyl-sn-glycerol + phosphate. It carries out the reaction 1,2-di-(9Z-octadecenoyl)-sn-glycero-3-phosphate + H2O = 1,2-di-(9Z-octadecenoyl)-sn-glycerol + phosphate. The enzyme catalyses a monoacyl-sn-glycero-3-phosphate + H2O = a monoacylglycerol + phosphate. It catalyses the reaction (9Z)-octadecenoyl-sn-glycero-3-phosphate + H2O = (9Z-octadecenoyl)-glycerol + phosphate. The catalysed reaction is a 1-acyl-sn-glycero-3-phosphate + H2O = a 1-acyl-sn-glycerol + phosphate. It carries out the reaction 1-(9Z-octadecenoyl)-sn-glycero-3-phosphate + H2O = 1-(9Z-octadecenoyl)-sn-glycerol + phosphate. The enzyme catalyses a 1,2-diacyl-sn-glycerol 3-diphosphate + H2O = a 1,2-diacyl-sn-glycero-3-phosphate + phosphate + H(+). It catalyses the reaction sphing-4-enine 1-phosphate + H2O = sphing-4-enine + phosphate. The catalysed reaction is an N-acylsphing-4-enine 1-phosphate + H2O = an N-acylsphing-4-enine + phosphate. It carries out the reaction N-(octanoyl)-sphing-4-enine-1-phosphate + H2O = N-octanoylsphing-4-enine + phosphate. The enzyme catalyses N-(9Z-octadecenoyl)-ethanolamine phosphate + H2O = N-(9Z-octadecenoyl) ethanolamine + phosphate. It catalyses the reaction 1-hexadecanoyl-2-(9Z-octadecenoyl)-sn-glycero-3-phosphate + H2O = 1-hexadecanoyl-2-(9Z-octadecenoyl)-sn-glycerol + phosphate. The protein operates within lipid metabolism; phospholipid metabolism. Magnesium-independent phospholipid phosphatase. Insensitive to N-ethylmaleimide. Its function is as follows. Magnesium-independent phospholipid phosphatase of the plasma membrane that catalyzes the dephosphorylation of a variety of glycerolipid and sphingolipid phosphate esters including phosphatidate/PA, lysophosphatidate/LPA, diacylglycerol pyrophosphate/DGPP, sphingosine 1-phosphate/S1P and ceramide 1-phosphate/C1P. Also acts on N-oleoyl ethanolamine phosphate/N-(9Z-octadecenoyl)-ethanolamine phosphate, a potential physiological compound. Through its extracellular phosphatase activity allows both the hydrolysis and the cellular uptake of these bioactive lipid mediators from the milieu, regulating signal transduction in different cellular processes. It is for instance essential for the extracellular hydrolysis of S1P and subsequent conversion into intracellular S1P. Involved in the regulation of inflammation, platelets activation, cell proliferation and migration among other processes. May also have an intracellular activity to regulate phospholipid-mediated signaling pathways. This is Phospholipid phosphatase 1 from Mus musculus (Mouse).